We begin with the raw amino-acid sequence, 135 residues long: Galectin-1 (135 aa).

An N-acetylalanine modification is found at Ala2. The region spanning 4 to 135 is the Galectin domain; the sequence is GLVASNLNLK…DFKIKCVAFE (132 aa). 3 positions are modified to N6-acetyllysine: Lys13, Lys19, and Lys29. Ser30 is modified (phosphoserine). Residues 45-49, His53, Asn62, and 69-72 each bind a beta-D-galactoside; these read HFNPR and WGAE. The residue at position 128 (Lys128) is an N6-acetyllysine.

Homodimer. Binds LGALS3BP. Interacts with CD2, CD3, CD4, CD6, CD7, CD43, ALCAM and CD45. Interacts with laminin (via poly-N-acetyllactosamine). Interacts with SUSD2. Interacts with cargo receptor TMED10; the interaction mediates the translocation from the cytoplasm into the ERGIC (endoplasmic reticulum-Golgi intermediate compartment) and thereby secretion.

Its subcellular location is the secreted. The protein resides in the extracellular space. It is found in the extracellular matrix. The protein localises to the cytoplasm. Lectin that binds beta-galactoside and a wide array of complex carbohydrates. Plays a role in regulating apoptosis, cell proliferation and cell differentiation. Inhibits CD45 protein phosphatase activity and therefore the dephosphorylation of Lyn kinase. Strong inducer of T-cell apoptosis. This Sus scrofa (Pig) protein is Galectin-1 (LGALS1).